The sequence spans 312 residues: Ribosomal protein L11 methyltransferase (312 aa).

Residues threonine 159, glycine 180, aspartate 201, and asparagine 244 each coordinate S-adenosyl-L-methionine.

Belongs to the methyltransferase superfamily. PrmA family.

Its subcellular location is the cytoplasm. The enzyme catalyses L-lysyl-[protein] + 3 S-adenosyl-L-methionine = N(6),N(6),N(6)-trimethyl-L-lysyl-[protein] + 3 S-adenosyl-L-homocysteine + 3 H(+). Methylates ribosomal protein L11. The protein is Ribosomal protein L11 methyltransferase of Desulfitobacterium hafniense (strain DSM 10664 / DCB-2).